The following is a 219-amino-acid chain: RNA chaperone ProQ (219 aa).

The segment at 102–160 is disordered; sequence TLKESQDKAKAKRAERSKDEGDAADKAPRKPKRKPQPQARRDAKPAAKDKPKAAPKAPA. Basic and acidic residues-rich tracts occupy residues 105-129 and 140-153; these read ESQDKAKAKRAERSKDEGDAADKAP and ARRDAKPAAKDKPK.

This sequence belongs to the ProQ family.

It localises to the cytoplasm. In terms of biological role, RNA chaperone with significant RNA binding, RNA strand exchange and RNA duplexing activities. This chain is RNA chaperone ProQ, found in Shewanella amazonensis (strain ATCC BAA-1098 / SB2B).